The primary structure comprises 379 residues: Carbamoyl phosphate synthase small chain (379 aa).

Positions 1-184 (MVSLYLENGL…LDYKPFDEKN (184 aa)) are CPSase. Residues Ser44, Gly240, and Gly242 each coordinate L-glutamine. Positions 188–378 (TIAVLDFGAK…VKLLENFPTR (191 aa)) constitute a Glutamine amidotransferase type-1 domain. The active-site Nucleophile is the Cys268. Residues Leu269, Gln272, Asn310, and Tyr313 each coordinate L-glutamine. Catalysis depends on residues His351 and Glu353.

It belongs to the CarA family. Composed of two chains; the small (or glutamine) chain promotes the hydrolysis of glutamine to ammonia, which is used by the large (or ammonia) chain to synthesize carbamoyl phosphate. Tetramer of heterodimers (alpha,beta)4.

It catalyses the reaction hydrogencarbonate + L-glutamine + 2 ATP + H2O = carbamoyl phosphate + L-glutamate + 2 ADP + phosphate + 2 H(+). The catalysed reaction is L-glutamine + H2O = L-glutamate + NH4(+). It participates in amino-acid biosynthesis; L-arginine biosynthesis; carbamoyl phosphate from bicarbonate: step 1/1. The protein operates within pyrimidine metabolism; UMP biosynthesis via de novo pathway; (S)-dihydroorotate from bicarbonate: step 1/3. Functionally, small subunit of the glutamine-dependent carbamoyl phosphate synthetase (CPSase). CPSase catalyzes the formation of carbamoyl phosphate from the ammonia moiety of glutamine, carbonate, and phosphate donated by ATP, constituting the first step of 2 biosynthetic pathways, one leading to arginine and/or urea and the other to pyrimidine nucleotides. The small subunit (glutamine amidotransferase) binds and cleaves glutamine to supply the large subunit with the substrate ammonia. This Helicobacter acinonychis (strain Sheeba) protein is Carbamoyl phosphate synthase small chain.